The chain runs to 86 residues: Large ribosomal subunit protein bL27 (86 aa).

This sequence belongs to the bacterial ribosomal protein bL27 family.

The polypeptide is Large ribosomal subunit protein bL27 (Flavobacterium psychrophilum (strain ATCC 49511 / DSM 21280 / CIP 103535 / JIP02/86)).